The following is a 74-amino-acid chain: RNA-binding protein Hfq (74 aa).

The Sm domain occupies 9–69 (DQFLNQLRKE…ISTFVPQKNV (61 aa)).

This sequence belongs to the Hfq family. Homohexamer.

Its function is as follows. RNA chaperone that binds small regulatory RNA (sRNAs) and mRNAs to facilitate mRNA translational regulation in response to envelope stress, environmental stress and changes in metabolite concentrations. Also binds with high specificity to tRNAs. The chain is RNA-binding protein Hfq from Bacillus cereus (strain Q1).